The sequence spans 86 residues: Small ribosomal subunit protein uS17 (86 aa).

This sequence belongs to the universal ribosomal protein uS17 family. Part of the 30S ribosomal subunit.

Its function is as follows. One of the primary rRNA binding proteins, it binds specifically to the 5'-end of 16S ribosomal RNA. The chain is Small ribosomal subunit protein uS17 from Bifidobacterium longum (strain DJO10A).